The sequence spans 801 residues: Elongation factor G, mitochondrial (801 aa).

The N-terminal 62 residues, 1 to 62 (MRTPTLARLP…LSKHFQQRRN (62 aa)), are a transit peptide targeting the mitochondrion. A tr-type G domain is found at 99 to 386 (SRVRNIGIAA…GVIDYLPNPS (288 aa)). Residues 108–115 (AHIDSGKT), 184–188 (DTPGH), and 238–241 (NKMD) each bind GTP.

The protein belongs to the TRAFAC class translation factor GTPase superfamily. Classic translation factor GTPase family. EF-G/EF-2 subfamily.

It localises to the mitochondrion. It participates in protein biosynthesis; polypeptide chain elongation. Functionally, mitochondrial GTPase that catalyzes the GTP-dependent ribosomal translocation step during translation elongation. During this step, the ribosome changes from the pre-translocational (PRE) to the post-translocational (POST) state as the newly formed A-site-bound peptidyl-tRNA and P-site-bound deacylated tRNA move to the P and E sites, respectively. Catalyzes the coordinated movement of the two tRNA molecules, the mRNA and conformational changes in the ribosome. The protein is Elongation factor G, mitochondrial (mef1) of Aspergillus niger (strain ATCC MYA-4892 / CBS 513.88 / FGSC A1513).